We begin with the raw amino-acid sequence, 119 residues long: Integration host factor subunit beta (119 aa).

Residues 91–119 (DLVGNDQGDDSSNGSSDPLQSVMDMHAMH) are disordered. The segment covering 94–107 (GNDQGDDSSNGSSD) has biased composition (low complexity).

This sequence belongs to the bacterial histone-like protein family. In terms of assembly, heterodimer of an alpha and a beta chain.

Its function is as follows. This protein is one of the two subunits of integration host factor, a specific DNA-binding protein that functions in genetic recombination as well as in transcriptional and translational control. The sequence is that of Integration host factor subunit beta from Bordetella parapertussis (strain 12822 / ATCC BAA-587 / NCTC 13253).